Reading from the N-terminus, the 56-residue chain is Small ribosomal subunit protein uS14A (56 aa).

Positions 21 and 24 each coordinate Zn(2+). At Ser-25 the chain carries Phosphoserine. 2 residues coordinate Zn(2+): Cys-39 and Cys-42.

Belongs to the universal ribosomal protein uS14 family. As to quaternary structure, component of the small ribosomal subunit (SSU). Mature yeast ribosomes consist of a small (40S) and a large (60S) subunit. The 40S small subunit contains 1 molecule of ribosomal RNA (18S rRNA) and 33 different proteins (encoded by 57 genes). The large 60S subunit contains 3 rRNA molecules (25S, 5.8S and 5S rRNA) and 46 different proteins (encoded by 81 genes). Zn(2+) serves as cofactor.

The protein localises to the cytoplasm. Functionally, component of the ribosome, a large ribonucleoprotein complex responsible for the synthesis of proteins in the cell. The small ribosomal subunit (SSU) binds messenger RNAs (mRNAs) and translates the encoded message by selecting cognate aminoacyl-transfer RNA (tRNA) molecules. The large subunit (LSU) contains the ribosomal catalytic site termed the peptidyl transferase center (PTC), which catalyzes the formation of peptide bonds, thereby polymerizing the amino acids delivered by tRNAs into a polypeptide chain. The nascent polypeptides leave the ribosome through a tunnel in the LSU and interact with protein factors that function in enzymatic processing, targeting, and the membrane insertion of nascent chains at the exit of the ribosomal tunnel. This is Small ribosomal subunit protein uS14A from Saccharomyces cerevisiae (strain ATCC 204508 / S288c) (Baker's yeast).